The sequence spans 40 residues: AAKDIKFGVEARGLMLQGVEQLADAVKVTMGPKGRNVVIE.

This sequence belongs to the chaperonin (HSP60) family.

Its subcellular location is the mitochondrion. Its function is as follows. Implicated in mitochondrial protein import and macromolecular assembly. May facilitate the correct folding of imported proteins. May also prevent misfolding and promote the refolding and proper assembly of unfolded polypeptides generated under stress conditions in the mitochondrial matrix. The sequence is that of Chaperonin HSP60, mitochondrial from Solanum tuberosum (Potato).